The chain runs to 440 residues: Tumor necrosis factor receptor superfamily member 10B (440 aa).

Disordered regions lie at residues 1–32 (MEQRGQNAPAASGARKRHGPGPREARGARPGP) and 60–84 (DLAPQQRAAPQQKRSSPSEGLCPPG). The N-terminal stretch at 1–55 (MEQRGQNAPAASGARKRHGPGPREARGARPGPRVPKTLVLVVAAVLLLVSAESAL) is a signal peptide. Residues 56 to 210 (ITQQDLAPQQ…SPGTPASPCS (155 aa)) are Extracellular-facing. TNFR-Cys repeat units lie at residues 57 to 94 (TQQDLAPQQRAAPQQKRSSPSEGLCPPGHHISEDGRDC), 97 to 137 (CKYG…NTVC), and 138 to 178 (QCEE…DIEC). The span at 60-71 (DLAPQQRAAPQQ) shows a compositional bias: low complexity. 7 cysteine pairs are disulfide-bonded: C81-C94, C97-C113, C116-C129, C119-C137, C139-C153, C156-C170, and C160-C178. One copy of the TAPE repeat lies at 192–206 (PAVEETVTSSPGTPA). A helical transmembrane segment spans residues 211 to 231 (LSGIIIGVTVAAVVLIVAVFV). The Cytoplasmic segment spans residues 232–440 (CKSLLWKKVL…LEGNADSAMS (209 aa)). The Death domain maps to 339–422 (RQCFDDFADL…LAKQKIEDHL (84 aa)).

In terms of assembly, monomer. Can interact with TRADD and RIPK1. Interacts with HCMV protein UL141; this interaction prevents TNFRSF10B cell surface expression. Two TNFRSF10B monomers interact with a UL141 homodimer. Three TNFRSF10B molecules interact with TNFSF10 homotrimer. In the absence of stimulation, interacts with BIRC2, DDX3X and GSK3B. The interaction with BIRC2 and DDX3X is further enhanced upon receptor stimulation and accompanied by DDX3X and BIRC2 cleavage. (Microbial infection) Glycosylated on Arg residue by S.typhimurium protein Ssek3. Widely expressed in adult and fetal tissues; very highly expressed in tumor cell lines such as HeLaS3, K-562, HL-60, SW480, A-549 and G-361; highly expressed in heart, peripheral blood lymphocytes, liver, pancreas, spleen, thymus, prostate, ovary, uterus, placenta, testis, esophagus, stomach and throughout the intestinal tract; not detectable in brain.

It is found in the membrane. In terms of biological role, receptor for the cytotoxic ligand TNFSF10/TRAIL. The adapter molecule FADD recruits caspase-8 to the activated receptor. The resulting death-inducing signaling complex (DISC) performs caspase-8 proteolytic activation which initiates the subsequent cascade of caspases (aspartate-specific cysteine proteases) mediating apoptosis. Promotes the activation of NF-kappa-B. Essential for ER stress-induced apoptosis. This Homo sapiens (Human) protein is Tumor necrosis factor receptor superfamily member 10B (TNFRSF10B).